A 297-amino-acid polypeptide reads, in one-letter code: uncharacterized protein (297 aa).

3 disordered regions span residues 1-20, 39-100, and 174-297; these read MDTL…NADV, IEKD…ENLG, and VQKA…NEDQ. In terms of domain architecture, RRM spans 101-179; it reads NDLFVSGIAS…RVLNVQKAKR (79 aa). Residue serine 184 is modified to Phosphoserine. 2 stretches are compositionally biased toward basic and acidic residues: residues 209–223 and 233–253; these read GGYR…DSNR and PQRE…DSRP. The segment covering 254 to 263 has biased composition (basic residues); the sequence is RRERHFHGRS. Positions 287 to 297 are enriched in polar residues; the sequence is SHSSVPPNEDQ.

It localises to the nucleus. This is an uncharacterized protein from Schizosaccharomyces pombe (strain 972 / ATCC 24843) (Fission yeast).